A 465-amino-acid polypeptide reads, in one-letter code: Ran-binding protein 3-like (465 aa).

Residues 276 to 417 (SQPSRKCLLE…ALQSFNKQRD (142 aa)) enclose the RanBD1 domain.

In terms of assembly, interacts with SMAD1, SMAD5 and SMAD8; the interaction (with SMAD at least) increases when SMAD1 is not phosphorylated and mediates SMAD1 nuclear export.

Its subcellular location is the nucleus. It localises to the cytoplasm. Its function is as follows. Nuclear export factor for BMP-specific SMAD1/5/8 that plays a critical role in terminating BMP signaling and regulating mesenchymal stem cell differentiation by blocking osteoblast differentiation to promote myogenic differention. Directly recognizes dephosphorylated SMAD1/5/8 and mediates their nuclear export in a Ran-dependent manner. This Homo sapiens (Human) protein is Ran-binding protein 3-like (RANBP3L).